The sequence spans 397 residues: Ethanolaminephosphotransferase 1 (397 aa).

Alanine 2 bears the N-acetylalanine mark. 10 helical membrane passes run 47-69 (WLAP…LLMA), 84-103 (HVPD…AYTL), 123-145 (LFDH…SIFG), 150-172 (GVSV…LSHW), 179-201 (ILFL…IVTA), 221-243 (LFTA…LNFF), 256-278 (VYEA…AWIL), 291-310 (VFYF…LIVC), 317-339 (CPTL…LGVA), and 344-366 (SILL…VRVV). A non-standard amino acid (selenocysteine) is located at residue selenocysteine 387.

Belongs to the CDP-alcohol phosphatidyltransferase class-I family. The cofactor is Mg(2+). Mn(2+) is required as a cofactor.

Its subcellular location is the endoplasmic reticulum membrane. It catalyses the reaction CDP-ethanolamine + a 1,2-diacyl-sn-glycerol = a 1,2-diacyl-sn-glycero-3-phosphoethanolamine + CMP + H(+). The enzyme catalyses 1-O-alkyl-2-acyl-sn-glycerol + CDP-ethanolamine = a 1-O-alkyl-2-acyl-sn-glycero-3-phosphoethanolamine + CMP + H(+). The protein operates within phospholipid metabolism; phosphatidylethanolamine biosynthesis; phosphatidylethanolamine from ethanolamine: step 3/3. In terms of biological role, ethanolaminephosphotransferase that catalyzes the transfer of phosphoethanolamine (PE) from CDP-ethanolamine to lipid acceptors, the final step in the synthesis of PE via the 'Kennedy' pathway. PE is the second most abundant phospholipid of membranes in mammals and is involved in various membrane-related cellular processes. The enzyme is critical for the synthesis of several PE species and also catalyzes the synthesis of plasmanyl-PE, a lipid required for proper myelination and neurodevelopment, from 1-alkyl-2-acylglycerol. In Pongo abelii (Sumatran orangutan), this protein is Ethanolaminephosphotransferase 1.